An 892-amino-acid polypeptide reads, in one-letter code: Formin-like protein 8 (892 aa).

An N-terminal signal peptide occupies residues 1–23 (MPPAIARFVAIAAVLLCGHVAVA). The segment at 43–119 (FPIEWTPPPS…SGSGSGHHGG (77 aa)) is disordered. A compositionally biased stretch (pro residues) spans 47–59 (WTPPPSPPPPPAP). Residues 87 to 111 (TTPTSPGTTPSPTTVAADVSKTPSG) are compositionally biased toward low complexity. The chain crosses the membrane as a helical span at residues 126-146 (IVAAGAGAAAAVALLGFACAF). Residues 188–457 (PTTPARHHGP…GSGEPRPKLK (270 aa)) form a disordered region. The span at 210–230 (LRSERARRGVSRDEDADHPSP) shows a compositional bias: basic and acidic residues. 3 stretches are compositionally biased toward low complexity: residues 268 to 286 (AEAW…TTAS), 297 to 306 (FFPPVAAIAA), and 321 to 330 (RTRFSTGSTP). Positions 339-383 (SPRPVQPSNAPPPPPPPPPPPPPPPPPKLNTAPKPPPPPPPPPSV) are enriched in pro residues. Polar residues predominate over residues 424-436 (AATTVDNNGSTSM). Residues 446 to 867 (DGGSGEPRPK…GSARSFRISA (422 aa)) form the FH2 domain.

It belongs to the formin-like family. Class-I subfamily.

The protein resides in the membrane. The protein is Formin-like protein 8 (FH8) of Oryza sativa subsp. japonica (Rice).